Here is a 180-residue protein sequence, read N- to C-terminus: MSIEEIPQGADVSILSKNEKKARELIKKLNLKQIKGITRVTFKQRGNLIYAIDQPDVFRSSAGTYVVFGEAKVDDMNKRIAEAQQQQAQQDALSKAAGETGEAGEEDKSQDAITADLEKASLNTNKIEEEEADDGEVDESGLDAKDIDIIVEQTQVSRAKAVKALRVHDGDMVNAIMELS.

The NAC-A/B domain occupies 16–80 (SKNEKKAREL…AKVDDMNKRI (65 aa)). The segment at 81 to 113 (AEAQQQQAQQDALSKAAGETGEAGEEDKSQDAI) is disordered. The segment covering 82–100 (EAQQQQAQQDALSKAAGET) has biased composition (low complexity). The UBA domain maps to 142 to 179 (LDAKDIDIIVEQTQVSRAKAVKALRVHDGDMVNAIMEL).

It belongs to the NAC-alpha family. As to quaternary structure, part of the nascent polypeptide-associated complex (NAC), consisting of EGD2 and EGD1. NAC associates with ribosomes via EGD1.

It is found in the cytoplasm. The protein resides in the nucleus. Component of the nascent polypeptide-associated complex (NAC), a dynamic component of the ribosomal exit tunnel, protecting the emerging polypeptides from interaction with other cytoplasmic proteins to ensure appropriate nascent protein targeting. The NAC complex also promotes mitochondrial protein import by enhancing productive ribosome interactions with the outer mitochondrial membrane and blocks the inappropriate interaction of ribosomes translating non-secretory nascent polypeptides with translocation sites in the membrane of the endoplasmic reticulum. EGD2 may also be involved in transcription regulation. The chain is Nascent polypeptide-associated complex subunit alpha (EGD2) from Debaryomyces hansenii (strain ATCC 36239 / CBS 767 / BCRC 21394 / JCM 1990 / NBRC 0083 / IGC 2968) (Yeast).